The sequence spans 224 residues: Putative O-methyltransferase MUL_4520 (224 aa).

The span at 1–11 (MHGTDSSSDTP) shows a compositional bias: polar residues. The interval 1 to 20 (MHGTDSSSDTPGQPAPSRAE) is disordered. Residues Val51, Glu73, 75 to 76 (GT), Ser81, Asp99, and Ile100 each bind S-adenosyl-L-methionine. Asp147 lines the substrate pocket. Asp149 lines the S-adenosyl-L-methionine pocket.

Belongs to the class I-like SAM-binding methyltransferase superfamily. Cation-dependent O-methyltransferase family.

This chain is Putative O-methyltransferase MUL_4520, found in Mycobacterium ulcerans (strain Agy99).